We begin with the raw amino-acid sequence, 471 residues long: Putative pentatricopeptide repeat-containing protein At1g53330 (471 aa).

10 PPR repeats span residues 46-81, 82-116, 117-147, 151-185, 186-221, 222-256, 257-291, 292-326, 327-361, and 362-396; these read SLLC…RIVP, TEII…RCQR, TVKS…IDEF, DACT…KVKP, TGVT…GVRP, TVHI…KIKV, DAAI…GCKP, DTVT…GLKP, DVIS…GCSP, and DTLS…GYKP.

It belongs to the PPR family. P subfamily.

In terms of biological role, involved during embryo development. This is Putative pentatricopeptide repeat-containing protein At1g53330 from Arabidopsis thaliana (Mouse-ear cress).